The sequence spans 144 residues: Large ribosomal subunit protein uL15 (144 aa).

The segment at 1–56 is disordered; sequence MELNNLKPAAGAKHAKRRVGRGIGSGLGKTAGRGHKGQKSRSGGFHKVGFEGGQMP. Residues 21–31 show a composition bias toward gly residues; it reads RGIGSGLGKTA.

Belongs to the universal ribosomal protein uL15 family. As to quaternary structure, part of the 50S ribosomal subunit.

Its function is as follows. Binds to the 23S rRNA. The sequence is that of Large ribosomal subunit protein uL15 from Burkholderia cenocepacia (strain HI2424).